The chain runs to 571 residues: Glutamate--tRNA ligase (571 aa).

The short motif at 106-116 (PNPDGAFHLGN) is the 'HIGH' region element.

Belongs to the class-I aminoacyl-tRNA synthetase family. Glutamate--tRNA ligase type 2 subfamily.

It is found in the cytoplasm. It carries out the reaction tRNA(Glu) + L-glutamate + ATP = L-glutamyl-tRNA(Glu) + AMP + diphosphate. In terms of biological role, catalyzes the attachment of glutamate to tRNA(Glu) in a two-step reaction: glutamate is first activated by ATP to form Glu-AMP and then transferred to the acceptor end of tRNA(Glu). The chain is Glutamate--tRNA ligase from Pyrococcus abyssi (strain GE5 / Orsay).